Reading from the N-terminus, the 531-residue chain is Ultra-long-chain fatty acid omega-hydroxylase (531 aa).

At 1–22 the chain is on the lumenal side; that stretch reads MLPITDRLLHLLGLEKTAFRIY. Residues 23 to 43 traverse the membrane as a helical segment; the sequence is AVSTLLLFLLFFLFRLLLRFL. Over 44–531 the chain is Cytoplasmic; sequence RLCRSFYITC…LKVEPLPPRA (488 aa). Positions 335 and 475 each coordinate heme.

Belongs to the cytochrome P450 family. Heme serves as cofactor.

The protein resides in the endoplasmic reticulum membrane. The protein localises to the microsome membrane. It carries out the reaction triacontanoate + reduced [NADPH--hemoprotein reductase] + O2 = omega-hydroxy-triacontanoate + oxidized [NADPH--hemoprotein reductase] + H2O + H(+). The catalysed reaction is an omega-methyl-ultra-long-chain fatty acid + reduced [NADPH--hemoprotein reductase] + O2 = an omega-hydroxy-ultra-long-chain fatty acid + oxidized [NADPH--hemoprotein reductase] + H2O + H(+). A cytochrome P450 monooxygenase involved in epidermal ceramide biosynthesis. Hydroxylates the terminal carbon (omega-hydroxylation) of ultra-long-chain fatty acyls (C28-C36) prior to ceramide synthesis. Contributes to the synthesis of three classes of omega-hydroxy-ultra-long chain fatty acylceramides having sphingosine, 6-hydroxysphingosine and phytosphingosine bases, all major lipid components that underlie the permeability barrier of the stratum corneum. Mechanistically, uses molecular oxygen inserting one oxygen atom into a substrate, and reducing the second into a water molecule, with two electrons provided by NADPH via cytochrome P450 reductase (CPR; NADPH-ferrihemoprotein reductase). The protein is Ultra-long-chain fatty acid omega-hydroxylase of Homo sapiens (Human).